The sequence spans 368 residues: Protein-glutamate methylesterase/protein-glutamine glutaminase (368 aa).

Positions K9–E126 constitute a Response regulatory domain. Residue D60 is modified to 4-aspartylphosphate. The CheB-type methylesterase domain occupies S161–I354. Residues S173, H200, and D296 contribute to the active site.

This sequence belongs to the CheB family. Post-translationally, phosphorylated by CheA. Phosphorylation of the N-terminal regulatory domain activates the methylesterase activity.

The protein localises to the cytoplasm. The enzyme catalyses [protein]-L-glutamate 5-O-methyl ester + H2O = L-glutamyl-[protein] + methanol + H(+). The catalysed reaction is L-glutaminyl-[protein] + H2O = L-glutamyl-[protein] + NH4(+). In terms of biological role, involved in chemotaxis. Part of a chemotaxis signal transduction system that modulates chemotaxis in response to various stimuli. Catalyzes the demethylation of specific methylglutamate residues introduced into the chemoreceptors (methyl-accepting chemotaxis proteins or MCP) by CheR. Also mediates the irreversible deamidation of specific glutamine residues to glutamic acid. The chain is Protein-glutamate methylesterase/protein-glutamine glutaminase from Pyrococcus horikoshii (strain ATCC 700860 / DSM 12428 / JCM 9974 / NBRC 100139 / OT-3).